A 358-amino-acid polypeptide reads, in one-letter code: tRNA (guanine-N(7)-)-methyltransferase (358 aa).

The interval 1–29 (MTPPPPKRQKRDEYRKATAEATSQSGASD) is disordered. Residues G99 and 122–123 (EI) contribute to the S-adenosyl-L-methionine site. The segment covering 151–186 (TATAASETPSQQQAQIDGKQANANAAADAASPAPST) has biased composition (low complexity). A disordered region spans residues 151–194 (TATAASETPSQQQAQIDGKQANANAAADAASPAPSTDTEHMPTT). S-adenosyl-L-methionine contacts are provided by residues 209–210 (NT) and C229. Residue D232 is part of the active site. Residue 330-332 (TEE) coordinates S-adenosyl-L-methionine.

This sequence belongs to the class I-like SAM-binding methyltransferase superfamily. TrmB family. In terms of assembly, forms a complex with trm82.

The protein localises to the nucleus. It carries out the reaction guanosine(46) in tRNA + S-adenosyl-L-methionine = N(7)-methylguanosine(46) in tRNA + S-adenosyl-L-homocysteine. It participates in tRNA modification; N(7)-methylguanine-tRNA biosynthesis. In terms of biological role, catalyzes the formation of N(7)-methylguanine at position 46 (m7G46) in tRNA. The protein is tRNA (guanine-N(7)-)-methyltransferase (trm8) of Aspergillus fumigatus (strain ATCC MYA-4609 / CBS 101355 / FGSC A1100 / Af293) (Neosartorya fumigata).